The sequence spans 409 residues: Peptidase T (409 aa).

H78 contacts Zn(2+). D80 is a catalytic residue. Residue D140 participates in Zn(2+) binding. The active-site Proton acceptor is the E173. Residues E174, D196, and H379 each coordinate Zn(2+).

It belongs to the peptidase M20B family. It depends on Zn(2+) as a cofactor.

It localises to the cytoplasm. It catalyses the reaction Release of the N-terminal residue from a tripeptide.. Its function is as follows. Cleaves the N-terminal amino acid of tripeptides. In Salmonella paratyphi C (strain RKS4594), this protein is Peptidase T.